Reading from the N-terminus, the 71-residue chain is UPF0346 protein str0441 (71 aa).

This sequence belongs to the UPF0346 family.

This is UPF0346 protein str0441 from Streptococcus thermophilus (strain CNRZ 1066).